The chain runs to 135 residues: Protein NrdI (135 aa).

The protein belongs to the NrdI family.

Probably involved in ribonucleotide reductase function. This Rhizobium johnstonii (strain DSM 114642 / LMG 32736 / 3841) (Rhizobium leguminosarum bv. viciae) protein is Protein NrdI.